The following is a 681-amino-acid chain: MSGPAHFQGTIMQVKAEIQRLTAEINRHNIAYYVQDAPSIPDAEYDRLMNQLKALEAEYPQFAEPDSPTQRVGGAALNKFEQVSHLKPMLSLDNAFNEEDFVAFDKRLTDKVGSQVYCAEPKLDGLAVSLIYRNGVLERAATRGDGAVGEDISVNMRTIKSVPLRLQGDDIPALVEVRGEVFMPRAAFEALNDRARAKGDKLFVNPRNAAAGSLRQLDSKITAERSLAFYAYALGVVQDDNGADLVLAPTHKGQLERLTAFGLPVSKEVKLCEGLAEVMAYYADILKRRDELAFEIDGVVIKVNDIEAQQQLGFVARAPRWAIAFKFPAQEEMTVLEGVDFQVGRTGAVTPVARLKPVFVGGVTVSNATLHNGDEIARLGVKIGDTVIIRRAGDVIPQIVAVVPERRPDEAQDILFPDNCPVCGSLVERIEGEAVARCSGGLFCEAQRREAIKHFASRKAMYIDGMGDKVVEQLIDKELVESPADLFKLNVSKLTMLERMGTKSATNLVAAIEEAKTTTLPKFLYALGIREVGEATAANLAKHFRSLEAIRDADVDALIQVEDVGTVVAQHVAHFFAQPHNLEVIDALIAAGVNWPAIEKPSADAQPLLGQTWVLTGTLTSLGRTEAKAKLEALGAKVAGSVSKNTHCVVAGEAAGSKLAKAQELGIPVLDEAGLIELIGL.

NAD(+) is bound by residues 42–46 (DAEYD), 91–92 (SL), and E120. The N6-AMP-lysine intermediate role is filled by K122. NAD(+) contacts are provided by R143, E180, K302, and K326. The Zn(2+) site is built by C420, C423, C438, and C444. The region spanning 603–681 (ADAQPLLGQT…EAGLIELIGL (79 aa)) is the BRCT domain.

This sequence belongs to the NAD-dependent DNA ligase family. LigA subfamily. Requires Mg(2+) as cofactor. Mn(2+) serves as cofactor.

The catalysed reaction is NAD(+) + (deoxyribonucleotide)n-3'-hydroxyl + 5'-phospho-(deoxyribonucleotide)m = (deoxyribonucleotide)n+m + AMP + beta-nicotinamide D-nucleotide.. Its function is as follows. DNA ligase that catalyzes the formation of phosphodiester linkages between 5'-phosphoryl and 3'-hydroxyl groups in double-stranded DNA using NAD as a coenzyme and as the energy source for the reaction. It is essential for DNA replication and repair of damaged DNA. This chain is DNA ligase, found in Shewanella amazonensis (strain ATCC BAA-1098 / SB2B).